The primary structure comprises 246 residues: Metallo-beta-lactamase IMP-1 (246 aa).

The signal sequence occupies residues 1–18 (MSKLSVFFIFLFCSIATA). Residues H95, H97, D99, H157, and C176 each contribute to the Zn(2+) site. Residues K179 and N185 each coordinate a beta-lactam. H215 lines the Zn(2+) pocket.

The protein belongs to the metallo-beta-lactamase superfamily. Class-B beta-lactamase family. Monomer. Requires Zn(2+) as cofactor.

It is found in the periplasm. It carries out the reaction a beta-lactam + H2O = a substituted beta-amino acid. Its activity is regulated as follows. Inhibited by captopril stereoisomers, Hg(2+), Fe(2+), Cu(2+), chelating agents such as EDTA, dansyl derivatives, including dansyl-C4SH, bisthiazolidines, mercaptoacetic acid and by PMPC phosphonates. Inhibited by 3-(3-mercaptopropionylsulfanyl)-propionic acid pentafluorophenyl ester, via a covalent binding to Lys-179. Not susceptible to inactivation by the beta-lactamase-blocking agents clavulanic acid or cloxacillin. In terms of biological role, class B beta-lactamase which confers resistance to the beta-lactam antibiotics, including penicillins, cephalosporins and carbapenems. Acts via hydrolysis of the beta-lactam ring. Has penicillin-, cephalosporin- and carbapenem-hydrolyzing activities. Has endoribonuclease activity, cleaving substrate RNAs preferentially between U/C and A, in vitro. This Serratia marcescens protein is Metallo-beta-lactamase IMP-1.